Reading from the N-terminus, the 355-residue chain is Probable poly-beta-1,6-N-acetyl-D-glucosamine export protein (355 aa).

Helical transmembrane passes span 13 to 30 (AFIC…QITL), 45 to 67 (YIRN…LTTL), 74 to 96 (INYL…LFYS), 116 to 138 (VLGQ…SYII), 145 to 167 (LFNS…HYFL), 187 to 204 (MILG…IGYN), 211 to 233 (FLEK…FIAV), 243 to 262 (SFTY…LLGV), 269 to 291 (MLLN…HPII), and 306 to 328 (TIVF…GMML).

Belongs to the acyltransferase 3 family.

It is found in the cell membrane. Its function is as follows. Presumably involved in the export of the biofilm adhesin polysaccharide poly-beta-1,6-N-acetyl-D-glucosamine (PNAG, also referred to as PIA) across the cell membrane. The polypeptide is Probable poly-beta-1,6-N-acetyl-D-glucosamine export protein (icaC) (Staphylococcus epidermidis).